We begin with the raw amino-acid sequence, 162 residues long: NADH-quinone oxidoreductase subunit I (162 aa).

4Fe-4S ferredoxin-type domains lie at 54–83 and 93–122; these read RRYE…IESE and TRYD…ETHI. Residues Cys63, Cys66, Cys69, Cys73, Cys102, Cys105, Cys108, and Cys112 each contribute to the [4Fe-4S] cluster site.

Belongs to the complex I 23 kDa subunit family. As to quaternary structure, NDH-1 is composed of 14 different subunits. Subunits NuoA, H, J, K, L, M, N constitute the membrane sector of the complex. It depends on [4Fe-4S] cluster as a cofactor.

The protein localises to the cell inner membrane. It catalyses the reaction a quinone + NADH + 5 H(+)(in) = a quinol + NAD(+) + 4 H(+)(out). Its function is as follows. NDH-1 shuttles electrons from NADH, via FMN and iron-sulfur (Fe-S) centers, to quinones in the respiratory chain. The immediate electron acceptor for the enzyme in this species is believed to be ubiquinone. Couples the redox reaction to proton translocation (for every two electrons transferred, four hydrogen ions are translocated across the cytoplasmic membrane), and thus conserves the redox energy in a proton gradient. The protein is NADH-quinone oxidoreductase subunit I of Paraburkholderia xenovorans (strain LB400).